A 669-amino-acid chain; its full sequence is Soluble guanylate cyclase 89Db (669 aa).

His-104 is a binding site for heme. The stretch at 430–458 (QHCSKLEIMFEKEEQRSDELEKSLELADS) forms a coiled coil. The Guanylate cyclase domain occupies 494–620 (SVIFIEVMNI…DTVNTASRME (127 aa)).

It belongs to the adenylyl cyclase class-4/guanylyl cyclase family. As to quaternary structure, heterodimer; with Gyc88E, in the presence of magnesium or manganese. Heme is required as a cofactor. As to expression, expressed in embryos in a segmental pattern in the ventral nerve cord (VNC) and in the brain, beginning at stage 13 and continuing through to stage 17. Colocalized with Gyc-89Db in several peripheral neurons that innervate trachea, basiconical sensilla and the sensory cones in the posterior segments of the embryo. Expression in wandering 3rd instar larvae is most prominent in a small cluster of cells located in the anterior medial region of each brain lobe. In the VNC, expression is found in scattered cells both laterally and at the midline.

It localises to the cytoplasm. The catalysed reaction is GTP = 3',5'-cyclic GMP + diphosphate. Probably not activated by nitric oxide (NO). Heterodimer exhibits some stimulation, compounds (SIN-1 and two of the NONOates) that were ineffective at stimulating Gyc-88E homodimer did stimulate the heterodimer. Functionally, heterodimers with Gyc88E are activated in response to changing oxygen concentrations, alerting flies to hypoxic environments. Under normal oxygen concentrations, oxygen binds to the heme group and results in low levels of guanylyl cyclase activity. When exposed to reduced oxygen concentrations, the oxygen dissociates from the heme group resulting in activation of the enzyme. The protein is Soluble guanylate cyclase 89Db of Drosophila melanogaster (Fruit fly).